Here is a 228-residue protein sequence, read N- to C-terminus: Phosphoglycolate phosphatase (228 aa).

The Nucleophile role is filled by Asp12. 3 residues coordinate Mg(2+): Asp12, Asp14, and Asp177.

It belongs to the HAD-like hydrolase superfamily. CbbY/CbbZ/Gph/YieH family. Requires Mg(2+) as cofactor.

It carries out the reaction 2-phosphoglycolate + H2O = glycolate + phosphate. It functions in the pathway organic acid metabolism; glycolate biosynthesis; glycolate from 2-phosphoglycolate: step 1/1. In terms of biological role, specifically catalyzes the dephosphorylation of 2-phosphoglycolate. Is involved in the dissimilation of the intracellular 2-phosphoglycolate formed during the DNA repair of 3'-phosphoglycolate ends, a major class of DNA lesions induced by oxidative stress. In Vibrio vulnificus (strain YJ016), this protein is Phosphoglycolate phosphatase.